The following is a 237-amino-acid chain: Protein CUSTOS (237 aa).

3 disordered regions span residues 1–23 (MAAPRRGTQKSDSDSSDEDLDRF), 50–69 (LRVRPDCHEHDGNELQTTPE), and 97–237 (ISKA…LGNE). Positions 52 to 62 (VRPDCHEHDGN) are enriched in basic and acidic residues. A compositionally biased stretch (polar residues) spans 162–177 (STLQQEPQSTPSNVCD). Residues 181–190 (PKKKRKKKKK) show a composition bias toward basic residues. The Nucleolar localization signal (NLS1) motif lies at 182 to 190 (KKKRKKKKK). Basic and acidic residues-rich tracts occupy residues 203-216 (ETMHIEPGKNELQA) and 225-237 (KLEMAHCDELGNE). Positions 217–225 (KRKKKKKQK) match the Nucleolar localization signal (NLS2) motif.

Belongs to the CUSTOS family. In terms of assembly, interacts (via NLS1 and NLS2) with dvl2; the interaction is negatively regulated by Wnt stimulation. Interacts with csnk1a1. Interacts with ctnnb1; the interaction is positively regulated by Wnt stimulation. Phosphorylated by ck1/csnk1a1.

The protein localises to the nucleus envelope. Essential for Spemann-Mangold organizer formation and subsequent anterior head development in the embryo. Inhibits canonical Wnt signaling pathway by antagonizing nuclear import of beta-catenin (ctnnb1) during embryogenesis. The chain is Protein CUSTOS from Xenopus laevis (African clawed frog).